A 77-amino-acid chain; its full sequence is Conotoxin ArMKLT2-0122 (77 aa).

The signal sequence occupies residues 1 to 22 (MKLTCVLIVAVLFLTACQLIAA). Residues 23-44 (DDSRDLKRFSRRKMRDGMLNTK) constitute a propeptide that is removed on maturation. Intrachain disulfides connect Cys-50–Cys-65, Cys-57–Cys-68, and Cys-64–Cys-73.

Belongs to the conotoxin O1 superfamily. Expressed by the venom duct.

It is found in the secreted. The sequence is that of Conotoxin ArMKLT2-0122 from Conus arenatus (Sand-dusted cone).